The following is a 434-amino-acid chain: MAAGLALARPNLLNPNNPIRSLSLAFWLWKAFVFLIIIGCPGPGYDTSTGLLPYQESAASGAKLEAIRHAPFSFPLKLVRWDSIYFVHIVRDDYVFEQEWAFGYGYTRILSFLTSVALSHIAHYFSVLALYRLSINIFGHDNTSGALISFLSATLHIICPAGAFLSAPYGESLFSFLNITGYFLYSSSLLDANAGKRASSDAKLLLAAALFSIATAVRSNGILSGALFAFDALLQLRKIFTQGISGDILLRLGVIVVGGCVIALGLIVPQWIAYTTFCMSDEPLRPWCEQLIPSIYGWVQVHYWNVGFLRYWTLSNLPLFILAFPMLFLMCRSSIWALNTAWPLDTATAVLTRLAAPNGLLAVMAFTSYHVQIINRISSGYPLWYWYIICQLSSHVADSSSVVKRSQTFSIAIQGMVIYAIVQAVLFGSFLPPA.

The next 10 membrane-spanning stretches (helical) occupy residues 22–42 (LSLA…GCPG), 109–129 (ILSF…SVLA), 145–165 (GALI…GAFL), 170–190 (GESL…SSLL), 210–230 (LFSI…LFAF), 252–272 (LGVI…PQWI), 311–331 (YWTL…FLMC), 354–374 (LAAP…VQII), 377–397 (ISSG…SHVA), and 411–431 (IAIQ…GSFL).

Belongs to the PIGV family.

Its subcellular location is the endoplasmic reticulum membrane. Its pathway is glycolipid biosynthesis; glycosylphosphatidylinositol-anchor biosynthesis. In terms of biological role, mannosyltransferase involved in glycosylphosphatidylinositol-anchor biosynthesis. Transfers the second mannose to the glycosylphosphatidylinositol during GPI precursor assembly. In Aspergillus oryzae (strain ATCC 42149 / RIB 40) (Yellow koji mold), this protein is GPI mannosyltransferase 2 (gpi18).